We begin with the raw amino-acid sequence, 1891 residues long: TATA-binding protein-associated factor mot1 (1891 aa).

An HEAT 1 repeat occupies 30 to 68; sequence PDELFNLLGRILPYLRSKSWDTRAAAAKAIGLIVANADT. Disordered stretches follow at residues 184–216, 241–283, and 295–316; these read FVASREHSIQGTSQPLASPIEPANGEESGLSKR, LSSR…LDRS, and FKGASVPENPLLQPESTEEGPN. Residues 264 to 275 are compositionally biased toward basic and acidic residues; the sequence is ENGEERNGDSKP. 2 HEAT repeats span residues 473 to 511 and 569 to 606; these read SKLMDGVLEAVMKGLGDYDDDVRAVSAATLVPIAEEFVK and SSFGKLVPRLYPFLRHTITSVRSAVLRALMTFLQLEGE. Low complexity predominate over residues 699–710; the sequence is SAAAPARSSPAS. The interval 699 to 740 is disordered; that stretch reads SAAAPARSSPASNTPEGTKGRRRKSEKKEAPPPSAHNVDGHM. 4 HEAT repeats span residues 957–996, 1139–1177, 1181–1216, and 1219–1257; these read PKKPSHIIKGMMDSIKKEENAELQQRSATAITSLVEYYTT, YPWVVDLLPLVVKALQCKLSVIRYAAAKCFATICSVITV, TMLVEKVLPMINDALDVHHRQGAVECIYHLIHVMED, and LPYVIFLVVPVLGRMSDSDNEVRLLATTSFATLVKLVPL. The 174-residue stretch at 1316-1489 folds into the Helicase ATP-binding domain; the sequence is AFLNRYNLHG…WSLFDFLMPG (174 aa). 1329–1336 provides a ligand contact to ATP; it reads DDMGLGKT. A DEAH box motif is present at residues 1440–1443; sequence DEGH. An HEAT 8 repeat occupies 1526–1565; that stretch reads EALHKQVLPFLLRRLKEEVLNDLPPKIIQNYYCDPSELQR. Residues 1663–1813 form the Helicase C-terminal domain; sequence DLSGASYVSP…STVVNQQNAG (151 aa).

This sequence belongs to the SNF2/RAD54 helicase family. As to quaternary structure, forms the NCT transcriptional regulatory complex with nctA and nctB.

The protein resides in the nucleus. Functionally, regulates transcription in association with TATA binding protein (TBP). Removes TBP from the TATA box via its C-terminal ATPase activity. Both transcription activation and repression require its ATPase activity. Part of the NCT transcriptional regulatory complex that acts as a key regulator of ergosterol biosynthesis and the azole exporter cdr1B. The NCT complex binds the promoters of genes linked to azole susceptibility, and especially represses the expression of cdr1B transporter. The chain is TATA-binding protein-associated factor mot1 from Aspergillus fumigatus (strain CBS 144.89 / FGSC A1163 / CEA10) (Neosartorya fumigata).